Here is a 451-residue protein sequence, read N- to C-terminus: COBRA-like protein 6 (451 aa).

The N-terminal stretch at 1-21 is a signal peptide; it reads MAVLGSLLLLILAATLSVAVA. N-linked (GlcNAc...) asparagine glycosylation is found at Asn-30, Asn-155, Asn-163, Asn-202, Asn-227, Asn-323, Asn-338, and Asn-357. Asn-426 is lipidated: GPI-anchor amidated asparagine. The propeptide at 427-451 is removed in mature form; the sequence is AAPPAAASLVGSAVAMAALVFFLMA.

Belongs to the COBRA family.

It is found in the cell membrane. In terms of biological role, involved in determining the orientation of cell expansion, probably by playing an important role in cellulose deposition. May act by recruiting cellulose synthesizing complexes to discrete positions on the cell surface. The chain is COBRA-like protein 6 (BC1L7) from Oryza sativa subsp. japonica (Rice).